A 315-amino-acid polypeptide reads, in one-letter code: Methionyl-tRNA formyltransferase (315 aa).

Residues 2–189 (SDSLRIIFAG…LITTLKQLAD (188 aa)) are N-terminal domain. 113–116 (SLLP) lines the (6S)-5,6,7,8-tetrahydrofolate pocket. The interval 210-315 (KEEARIDWSL…EWFIPGNRLA (106 aa)) is C-terminal domain.

This sequence belongs to the Fmt family.

It catalyses the reaction L-methionyl-tRNA(fMet) + (6R)-10-formyltetrahydrofolate = N-formyl-L-methionyl-tRNA(fMet) + (6S)-5,6,7,8-tetrahydrofolate + H(+). In terms of biological role, attaches a formyl group to the free amino group of methionyl-tRNA(fMet). The formyl group appears to play a dual role in the initiator identity of N-formylmethionyl-tRNA by promoting its recognition by IF2 and preventing the misappropriation of this tRNA by the elongation apparatus. In Salmonella typhi, this protein is Methionyl-tRNA formyltransferase.